The sequence spans 176 residues: MSMATIARPYAKAIFDFAVEHHSIEHWQNMLAFSAQVSAHKQVTQWLSGVMHSEKTAQIFISLCSDHLDEFSKNFIKIMAQNGRLSLLPEVLKQFMALRAMINSVIDIEVFSAIPLNEDQKKKIIFALEKRLQLKVTLNCKIDESILAGVIIRHGDRVIDGSVSNRLKRLKNFLLS.

Belongs to the ATPase delta chain family. F-type ATPases have 2 components, F(1) - the catalytic core - and F(0) - the membrane proton channel. F(1) has five subunits: alpha(3), beta(3), gamma(1), delta(1), epsilon(1). F(0) has three main subunits: a(1), b(2) and c(10-14). The alpha and beta chains form an alternating ring which encloses part of the gamma chain. F(1) is attached to F(0) by a central stalk formed by the gamma and epsilon chains, while a peripheral stalk is formed by the delta and b chains.

Its subcellular location is the cell membrane. In terms of biological role, f(1)F(0) ATP synthase produces ATP from ADP in the presence of a proton or sodium gradient. F-type ATPases consist of two structural domains, F(1) containing the extramembraneous catalytic core and F(0) containing the membrane proton channel, linked together by a central stalk and a peripheral stalk. During catalysis, ATP synthesis in the catalytic domain of F(1) is coupled via a rotary mechanism of the central stalk subunits to proton translocation. Functionally, this protein is part of the stalk that links CF(0) to CF(1). It either transmits conformational changes from CF(0) to CF(1) or is implicated in proton conduction. The polypeptide is ATP synthase subunit delta (Hamiltonella defensa subsp. Acyrthosiphon pisum (strain 5AT)).